A 637-amino-acid polypeptide reads, in one-letter code: Phospholipase B (637 aa).

Positions 1 to 19 are cleaved as a signal peptide; it reads MSIATATFAFSLFATIAFA. One can recognise a PLA2c domain in the interval 46–572; that stretch reads DCPSNVTWIR…DTWCWAGDDN (527 aa). N-linked (GlcNAc...) asparagine glycosylation is found at Asn-50, Asn-56, Asn-122, Asn-231, Asn-246, Asn-272, Asn-314, Asn-343, Asn-387, Asn-433, Asn-481, Asn-501, Asn-528, Asn-553, Asn-572, Asn-594, and Asn-606.

The protein belongs to the lysophospholipase family. Post-translationally, N-glycosylated.

The protein localises to the secreted. Its subcellular location is the cell membrane. The catalysed reaction is a 1-acyl-sn-glycero-3-phosphocholine + H2O = sn-glycerol 3-phosphocholine + a fatty acid + H(+). With respect to regulation, inhibited by Fe(3+) ion. Exhibits phospholipase B (PLB), lysophospholipase (LPL) and lysophospholipase/transacylase (LPTA) activities. This Cryptococcus neoformans var. grubii serotype A (strain H99 / ATCC 208821 / CBS 10515 / FGSC 9487) (Filobasidiella neoformans var. grubii) protein is Phospholipase B (PLB1).